The sequence spans 179 residues: IMPACT family member in pol 5'region (179 aa).

This sequence belongs to the IMPACT family.

The protein is IMPACT family member in pol 5'region of Thermus thermophilus.